The primary structure comprises 396 residues: Anaerobic glycerol-3-phosphate dehydrogenase subunit C (396 aa).

4Fe-4S ferredoxin-type domains are found at residues 2–29 (NDTS…PGYP) and 45–76 (DGAL…GDII). Positions 9, 12, 15, 19, 56, 59, 62, and 66 each coordinate [4Fe-4S] cluster.

As to quaternary structure, composed of a catalytic GlpA/B dimer and of GlpC.

It localises to the cell inner membrane. The protein operates within polyol metabolism; glycerol degradation via glycerol kinase pathway; glycerone phosphate from sn-glycerol 3-phosphate (anaerobic route): step 1/1. Its function is as follows. Electron transfer protein; may also function as the membrane anchor for the GlpAB dimer. The protein is Anaerobic glycerol-3-phosphate dehydrogenase subunit C (glpC) of Escherichia coli O157:H7.